The primary structure comprises 138 residues: MLWKKTFTLENLNQLCSNSAVSHLGIEISAFGEDWIEATMPVDHRTMQPFGVLHGGVSVALAETIGSLAGSLCLEEGKTVVGLDINANHLRPVRSGKVTARATPINLGRNIQVWQIDIRTEENKLCCVSRLTLSVINL.

This sequence belongs to the thioesterase PaaI family.

The chain is Putative esterase HI_1161 from Haemophilus influenzae (strain ATCC 51907 / DSM 11121 / KW20 / Rd).